The following is a 225-amino-acid chain: Perlwapin-like protein (225 aa).

Residues 1-19 (MNHLWLFIVTVSCIYLVYG) form the signal peptide. 4 disulfides stabilise this stretch: Cys-27–Cys-57, Cys-36–Cys-61, Cys-43–Cys-56, and Cys-49–Cys-65. The 42-residue stretch at 27–68 (CKVKFMGTACPLGRLVCEEDGDCLGVNQVCCYDGCGTTCHNK) folds into the WAP 1; atypical domain. Residue Asn-67 is glycosylated (N-linked (GlcNAc...) asparagine). A WAP 2 domain is found at 117 to 169 (IIPSPELLCPVVTVRYAFCRFSTYTPCHTSNDCAVPGMKCCPDVCGKRCKFPI). Disulfide bonds link Cys-125–Cys-157, Cys-135–Cys-161, Cys-143–Cys-156, and Cys-149–Cys-165. N-linked (GlcNAc...) asparagine glycosylation occurs at Asn-170. Residues 176-225 (QFQQTPLKPTVPLPQYQQTPLQPTVPSSQPPLQPTVPSPQSYNYKGACST) form a disordered region. Residues 188-201 (LPQYQQTPLQPTVP) show a composition bias toward low complexity. The span at 203-212 (SQPPLQPTVP) shows a compositional bias: pro residues. Over residues 213–225 (SPQSYNYKGACST) the composition is skewed to polar residues.

In terms of tissue distribution, component of the acid-soluble organic matrix of calcified layers of the shell (at protein level).

The protein resides in the secreted. The sequence is that of Perlwapin-like protein from Lottia gigantea (Giant owl limpet).